Reading from the N-terminus, the 310-residue chain is Isoflavone reductase homolog A622 (310 aa).

NADP(+) is bound by residues 13–19 (GGTGYIG), Arg38, and Lys47. Lys135 serves as the catalytic Proton acceptor. Arg139 lines the NADP(+) pocket.

It belongs to the NmrA-type oxidoreductase family. Isoflavone reductase subfamily. Monomer.

It is found in the cytoplasm. It participates in alkaloid biosynthesis; nicotine biosynthesis. Its function is as follows. NADPH-binding protein. Involved in the biosynthesis of pyridine alkaloid natural products, leading mainly to the production of anabasine, anatabine, nicotine and nornicotine, effective deterrents against herbivores with antiparasitic and pesticide properties (neurotoxins); nornicotine serves as the precursor in the synthesis of the carcinogen compound N'-nitrosonornicotine (NNN). Reductase involved in a late step of tobacco alkaloid biosynthesis. Triggers either the formation of a nicotinic acid-derived precursor or the final condensation reaction of tobacco alkaloids. This Nicotiana glauca (Glaucous tobacco) protein is Isoflavone reductase homolog A622.